A 508-amino-acid polypeptide reads, in one-letter code: Photosystem II CP47 reaction center protein (508 aa).

The next 6 helical transmembrane spans lie at 21-36, 101-115, 140-156, 203-218, 237-252, and 457-472; these read SVHIMHTALVSGWAGS, IVFSGLCFLASIWHW, GIHLFLSGVACFGFGAF, IAAGTLGILAGLFHLS, VLSSSIAAVFFAAFIV, and SFALLFFFGHIWHGAR.

It belongs to the PsbB/PsbC family. PsbB subfamily. In terms of assembly, PSII is composed of 1 copy each of membrane proteins PsbA, PsbB, PsbC, PsbD, PsbE, PsbF, PsbH, PsbI, PsbJ, PsbK, PsbL, PsbM, PsbT, PsbX, PsbY, PsbZ, Psb30/Ycf12, at least 3 peripheral proteins of the oxygen-evolving complex and a large number of cofactors. It forms dimeric complexes. It depends on Binds multiple chlorophylls. PSII binds additional chlorophylls, carotenoids and specific lipids. as a cofactor.

Its subcellular location is the plastid. It localises to the chloroplast thylakoid membrane. One of the components of the core complex of photosystem II (PSII). It binds chlorophyll and helps catalyze the primary light-induced photochemical processes of PSII. PSII is a light-driven water:plastoquinone oxidoreductase, using light energy to abstract electrons from H(2)O, generating O(2) and a proton gradient subsequently used for ATP formation. This Amborella trichopoda protein is Photosystem II CP47 reaction center protein.